The sequence spans 228 residues: Phosphatidate cytidylyltransferase (228 aa).

Helical transmembrane passes span 31 to 51, 65 to 85, 93 to 113, 131 to 151, 165 to 185, and 206 to 226; these read FVVAILWFKTLFYILMILVGL, IHYLLIGFIIIPIPISLLIFL, LVIMLYFCIIWSVDTFAMIGG, WTGLIIGTISAGLIAVLVSLI, IYLFIISCILALIAQSSDLFI, and GVLDRFDSIILTAPVFFGINI.

Belongs to the CDS family.

Its subcellular location is the cell membrane. The catalysed reaction is a 1,2-diacyl-sn-glycero-3-phosphate + CTP + H(+) = a CDP-1,2-diacyl-sn-glycerol + diphosphate. Its pathway is phospholipid metabolism; CDP-diacylglycerol biosynthesis; CDP-diacylglycerol from sn-glycerol 3-phosphate: step 3/3. The protein is Phosphatidate cytidylyltransferase (cdsA) of Rickettsia typhi (strain ATCC VR-144 / Wilmington).